The chain runs to 136 residues: Nucleoside diphosphate kinase (136 aa).

ATP-binding residues include Lys-10, Phe-58, Arg-86, Thr-92, Arg-104, and Asn-114. Residue His-117 is the Pros-phosphohistidine intermediate of the active site.

This sequence belongs to the NDK family. As to quaternary structure, homotetramer. Mg(2+) is required as a cofactor.

Its subcellular location is the cytoplasm. It catalyses the reaction a 2'-deoxyribonucleoside 5'-diphosphate + ATP = a 2'-deoxyribonucleoside 5'-triphosphate + ADP. The enzyme catalyses a ribonucleoside 5'-diphosphate + ATP = a ribonucleoside 5'-triphosphate + ADP. In terms of biological role, major role in the synthesis of nucleoside triphosphates other than ATP. The ATP gamma phosphate is transferred to the NDP beta phosphate via a ping-pong mechanism, using a phosphorylated active-site intermediate. In Mycolicibacterium vanbaalenii (strain DSM 7251 / JCM 13017 / BCRC 16820 / KCTC 9966 / NRRL B-24157 / PYR-1) (Mycobacterium vanbaalenii), this protein is Nucleoside diphosphate kinase.